Consider the following 232-residue polypeptide: Octanoyltransferase (232 aa).

Positions 43–231 constitute a BPL/LPL catalytic domain; sequence DQTPNYFLFV…HFTQLFDCTV (189 aa). Substrate-binding positions include 88–95, 160–162, and 173–175; these read RGGDITYH, ALG, and GFA. The Acyl-thioester intermediate role is filled by Cys191.

The protein belongs to the LipB family.

The protein localises to the cytoplasm. It carries out the reaction octanoyl-[ACP] + L-lysyl-[protein] = N(6)-octanoyl-L-lysyl-[protein] + holo-[ACP] + H(+). It functions in the pathway protein modification; protein lipoylation via endogenous pathway; protein N(6)-(lipoyl)lysine from octanoyl-[acyl-carrier-protein]: step 1/2. Functionally, catalyzes the transfer of endogenously produced octanoic acid from octanoyl-acyl-carrier-protein onto the lipoyl domains of lipoate-dependent enzymes. Lipoyl-ACP can also act as a substrate although octanoyl-ACP is likely to be the physiological substrate. The chain is Octanoyltransferase from Flavobacterium psychrophilum (strain ATCC 49511 / DSM 21280 / CIP 103535 / JIP02/86).